The primary structure comprises 462 residues: ATP synthase subunit beta (462 aa).

151–158 (GGAGVGKT) is an ATP binding site.

The protein belongs to the ATPase alpha/beta chains family. F-type ATPases have 2 components, CF(1) - the catalytic core - and CF(0) - the membrane proton channel. CF(1) has five subunits: alpha(3), beta(3), gamma(1), delta(1), epsilon(1). CF(0) has four main subunits: a(1), b(1), b'(1) and c(9-12).

The protein localises to the cell inner membrane. The catalysed reaction is ATP + H2O + 4 H(+)(in) = ADP + phosphate + 5 H(+)(out). Its function is as follows. Produces ATP from ADP in the presence of a proton gradient across the membrane. The catalytic sites are hosted primarily by the beta subunits. In Pelodictyon phaeoclathratiforme (strain DSM 5477 / BU-1), this protein is ATP synthase subunit beta.